Consider the following 418-residue polypeptide: Serum response factor homolog A (418 aa).

4 disordered regions span residues 14–67 (LGNV…GKKA), 144–170 (CLNT…LLQQ), 301–351 (RLGK…NNNS), and 388–418 (SSSS…FPPC). Low complexity-rich tracts occupy residues 22–39 (PSSP…PTST) and 51–61 (TSEPSSPSTGE). One can recognise an MADS-box domain in the interval 67–127 (AGRRKIKIEF…GHVYTFATAK (61 aa)). 3 stretches are compositionally biased toward low complexity: residues 150-170 (NPNS…LLQQ), 306-351 (NNNN…NNNS), and 388-399 (SSSSASSSPASP). The segment covering 400-418 (NQFNYSNHSMPLNNQFPPC) has biased composition (polar residues).

Its subcellular location is the nucleus. Its function is as follows. Required for proper slug migration, spore differentiation and stalk differentiation (under nonbuffered conditions). Could be involved in late events of spore maturation necessary for spore stability. In Dictyostelium discoideum (Social amoeba), this protein is Serum response factor homolog A (srfA).